Here is a 255-residue protein sequence, read N- to C-terminus: Probable septum site-determining protein MinC (255 aa).

Positions 103–115 (SHGRRPRGERSEE) are enriched in basic and acidic residues. The interval 103–136 (SHGRRPRGERSEEAAEAVPAAAEPVPAPAASPAP) is disordered. Pro residues predominate over residues 127 to 136 (VPAPAASPAP).

The protein belongs to the MinC family. In terms of assembly, interacts with MinD and FtsZ.

Functionally, cell division inhibitor that blocks the formation of polar Z ring septums. Rapidly oscillates between the poles of the cell to destabilize FtsZ filaments that have formed before they mature into polar Z rings. Prevents FtsZ polymerization. The chain is Probable septum site-determining protein MinC from Ralstonia nicotianae (strain ATCC BAA-1114 / GMI1000) (Ralstonia solanacearum).